We begin with the raw amino-acid sequence, 152 residues long: Type-1 angiotensin II receptor-associated protein (152 aa).

The Extracellular segment spans residues 1-23 (MELPAVNLKVILLGHWLLTTWGC). A helical transmembrane segment spans residues 24–44 (IVFSGSYAWANFTILALGVWA). Over 45 to 55 (VAQRDSIDAIS) the chain is Cytoplasmic. Residues 56–76 (MFLGGLLATIFLDIVHISIFY) traverse the membrane as a helical segment. The Extracellular portion of the chain corresponds to 77–86 (PRAGLTDTGR). A helical membrane pass occupies residues 87–107 (FGAGMAILSLLLKPLSCCFVY). Over 108 to 152 (HMYRQRGGFLGSSQDRSAYQTIDSAEAPANAFAVPEGRGQDARGY) the chain is Cytoplasmic. Residues Ser119 and Ser120 each carry the phosphoserine modification. A Phosphothreonine modification is found at Thr128. A Phosphoserine modification is found at Ser131.

In terms of assembly, interacts with RACK1, and with the carboxy-terminal region of AGTR1.

The protein resides in the endoplasmic reticulum membrane. It is found in the golgi apparatus membrane. Its subcellular location is the cytoplasmic vesicle membrane. Functionally, appears to be a negative regulator of type-1 angiotensin II receptor-mediated signaling by regulating receptor internalization as well as mechanism of receptor desensitization such as phosphorylation. Also induces a decrease in cell proliferation and angiotensin II-stimulated transcriptional activity. This Pongo abelii (Sumatran orangutan) protein is Type-1 angiotensin II receptor-associated protein (AGTRAP).